We begin with the raw amino-acid sequence, 309 residues long: Olfactory receptor 5AK2 (309 aa).

Residues Met-1 to Cys-25 lie on the Extracellular side of the membrane. N-linked (GlcNAc...) asparagine glycosylation occurs at Asn-5. The helical transmembrane segment at Ile-26–Ile-46 threads the bilayer. The Cytoplasmic segment spans residues Leu-47–Arg-54. The helical transmembrane segment at Phe-55–Ser-75 threads the bilayer. Residues Ala-76–Ile-99 are Extracellular-facing. Cys-97 and Cys-189 form a disulfide bridge. Residues Gln-100–Val-120 traverse the membrane as a helical segment. At Asp-121 to Thr-133 the chain is on the cytoplasmic side. The helical transmembrane segment at Val-134–Ile-154 threads the bilayer. Residue Asn-155 is glycosylated (N-linked (GlcNAc...) asparagine). Topologically, residues Asn-155 to Ile-196 are extracellular. Residues Met-197–Ser-217 form a helical membrane-spanning segment. Topologically, residues Tyr-218–Ser-237 are cytoplasmic. Residues Phe-238–Met-258 form a helical membrane-spanning segment. Over Tyr-259 to Met-271 the chain is Extracellular. Asn-265 carries an N-linked (GlcNAc...) asparagine glycan. A helical membrane pass occupies residues Lys-272–Leu-292. The Cytoplasmic segment spans residues Arg-293–Phe-309.

This sequence belongs to the G-protein coupled receptor 1 family.

The protein localises to the cell membrane. Functionally, odorant receptor. The protein is Olfactory receptor 5AK2 (OR5AK2) of Homo sapiens (Human).